A 126-amino-acid polypeptide reads, in one-letter code: FCS-Like Zinc finger 17 (126 aa).

Residues 41–85 (CFLKTCHLCNKQLHQDKDVYMYRGDLGFCSRECRESQMLIDDRKE) form an FLZ-type zinc finger.

The protein belongs to the FLZ family. In terms of assembly, interacts with KIN10 and KIN11 via its FLZ-type zinc finger domain. Forms heterodimer with FLZ2 in vitro.

Its subcellular location is the nucleus. The protein localises to the cytoplasm. Its function is as follows. May act as an adapter to facilitate the interaction of SnRK1 complex with effector proteins, conferring tissue- and stimulus-type specific differences in the SnRK1 regulation pathway. The protein is FCS-Like Zinc finger 17 of Arabidopsis thaliana (Mouse-ear cress).